We begin with the raw amino-acid sequence, 393 residues long: tRNA(Met) cytidine acetate ligase (393 aa).

3 residues coordinate ATP: Gly-81, Asn-142, and Arg-167.

This sequence belongs to the TmcAL family.

It localises to the cytoplasm. The catalysed reaction is cytidine(34) in elongator tRNA(Met) + acetate + ATP = N(4)-acetylcytidine(34) in elongator tRNA(Met) + AMP + diphosphate. Its function is as follows. Catalyzes the formation of N(4)-acetylcytidine (ac(4)C) at the wobble position of elongator tRNA(Met), using acetate and ATP as substrates. First activates an acetate ion to form acetyladenylate (Ac-AMP) and then transfers the acetyl group to tRNA to form ac(4)C34. The polypeptide is tRNA(Met) cytidine acetate ligase (Bacillus cereus (strain ATCC 14579 / DSM 31 / CCUG 7414 / JCM 2152 / NBRC 15305 / NCIMB 9373 / NCTC 2599 / NRRL B-3711)).